We begin with the raw amino-acid sequence, 68 residues long: Large ribosomal subunit protein bL35 (68 aa).

The protein belongs to the bacterial ribosomal protein bL35 family.

The chain is Large ribosomal subunit protein bL35 from Orientia tsutsugamushi (strain Ikeda) (Rickettsia tsutsugamushi).